The sequence spans 59 residues: Small ribosomal subunit protein bS21 (59 aa).

The tract at residues 27–59 (GLMAEMRKREHYEKPSVRRKKKAQARNKKKRYA) is disordered. Positions 31-42 (EMRKREHYEKPS) are enriched in basic and acidic residues. The segment covering 43–59 (VRRKKKAQARNKKKRYA) has biased composition (basic residues).

It belongs to the bacterial ribosomal protein bS21 family.

The polypeptide is Small ribosomal subunit protein bS21 (Carboxydothermus hydrogenoformans (strain ATCC BAA-161 / DSM 6008 / Z-2901)).